We begin with the raw amino-acid sequence, 375 residues long: tRNA/tmRNA (uracil-C(5))-methyltransferase (375 aa).

Residues glutamine 197, tyrosine 225, asparagine 230, glutamate 246, and aspartate 306 each coordinate S-adenosyl-L-methionine. The Nucleophile role is filled by cysteine 331. Residue glutamate 365 is the Proton acceptor of the active site.

It belongs to the class I-like SAM-binding methyltransferase superfamily. RNA M5U methyltransferase family. TrmA subfamily.

The enzyme catalyses uridine(54) in tRNA + S-adenosyl-L-methionine = 5-methyluridine(54) in tRNA + S-adenosyl-L-homocysteine + H(+). It carries out the reaction uridine(341) in tmRNA + S-adenosyl-L-methionine = 5-methyluridine(341) in tmRNA + S-adenosyl-L-homocysteine + H(+). Dual-specificity methyltransferase that catalyzes the formation of 5-methyluridine at position 54 (m5U54) in all tRNAs, and that of position 341 (m5U341) in tmRNA (transfer-mRNA). The sequence is that of tRNA/tmRNA (uracil-C(5))-methyltransferase from Aliarcobacter butzleri (strain RM4018) (Arcobacter butzleri).